The chain runs to 290 residues: 33 kDa chaperonin (290 aa).

2 disulfide bridges follow: Cys-235/Cys-237 and Cys-268/Cys-271.

It belongs to the HSP33 family. Post-translationally, under oxidizing conditions two disulfide bonds are formed involving the reactive cysteines. Under reducing conditions zinc is bound to the reactive cysteines and the protein is inactive.

Its subcellular location is the cytoplasm. Redox regulated molecular chaperone. Protects both thermally unfolding and oxidatively damaged proteins from irreversible aggregation. Plays an important role in the bacterial defense system toward oxidative stress. This Streptococcus pyogenes serotype M12 (strain MGAS2096) protein is 33 kDa chaperonin.